The following is a 208-amino-acid chain: Thymidylate kinase (208 aa).

10–17 (GGEGVGKS) is an ATP binding site.

This sequence belongs to the thymidylate kinase family.

It carries out the reaction dTMP + ATP = dTDP + ADP. In terms of biological role, phosphorylation of dTMP to form dTDP in both de novo and salvage pathways of dTTP synthesis. The sequence is that of Thymidylate kinase from Rhizorhabdus wittichii (strain DSM 6014 / CCUG 31198 / JCM 15750 / NBRC 105917 / EY 4224 / RW1) (Sphingomonas wittichii).